Here is a 433-residue protein sequence, read N- to C-terminus: Glutamyl-tRNA reductase (433 aa).

Substrate contacts are provided by residues 49-52 (TCNR), serine 109, 114-116 (EGQ), and glutamine 120. The active-site Nucleophile is cysteine 50. 189 to 194 (GAGKMS) is an NADP(+) binding site.

The protein belongs to the glutamyl-tRNA reductase family. Homodimer.

It catalyses the reaction (S)-4-amino-5-oxopentanoate + tRNA(Glu) + NADP(+) = L-glutamyl-tRNA(Glu) + NADPH + H(+). The protein operates within porphyrin-containing compound metabolism; protoporphyrin-IX biosynthesis; 5-aminolevulinate from L-glutamyl-tRNA(Glu): step 1/2. Its pathway is porphyrin-containing compound metabolism; chlorophyll biosynthesis. Its function is as follows. Catalyzes the NADPH-dependent reduction of glutamyl-tRNA(Glu) to glutamate 1-semialdehyde (GSA). This chain is Glutamyl-tRNA reductase, found in Acaryochloris marina (strain MBIC 11017).